Consider the following 102-residue polypeptide: Putative defensin-like protein 152 (102 aa).

The first 29 residues, 1–29 (MKKASQLSTTILTIFIVLAIGMMVKGTVG), serve as a signal peptide directing secretion. Disulfide bonds link Cys-34–Cys-93, Cys-51–Cys-71, Cys-56–Cys-87, and Cys-60–Cys-89.

The protein belongs to the DEFL family.

It localises to the secreted. In Arabidopsis thaliana (Mouse-ear cress), this protein is Putative defensin-like protein 152 (LCR11).